We begin with the raw amino-acid sequence, 354 residues long: uncharacterized protein (354 aa).

The segment at 96–130 (QVCPASAPNGKRAMKIPKVKEPRGENSSKKSSADQ) is disordered. Positions 113–127 (KVKEPRGENSSKKSS) are enriched in basic and acidic residues.

This is an uncharacterized protein from Caenorhabditis elegans.